The following is a 209-amino-acid chain: Thiamine-phosphate synthase (209 aa).

4-amino-2-methyl-5-(diphosphooxymethyl)pyrimidine is bound by residues 38–42 (QLREK) and Asn-70. 2 residues coordinate Mg(2+): Asp-71 and Asp-90. Ser-109 is a binding site for 4-amino-2-methyl-5-(diphosphooxymethyl)pyrimidine. 135 to 137 (TPT) is a 2-[(2R,5Z)-2-carboxy-4-methylthiazol-5(2H)-ylidene]ethyl phosphate binding site. Lys-138 is a 4-amino-2-methyl-5-(diphosphooxymethyl)pyrimidine binding site. Residues Gly-166 and 186 to 187 (IS) contribute to the 2-[(2R,5Z)-2-carboxy-4-methylthiazol-5(2H)-ylidene]ethyl phosphate site.

Belongs to the thiamine-phosphate synthase family. The cofactor is Mg(2+).

It catalyses the reaction 2-[(2R,5Z)-2-carboxy-4-methylthiazol-5(2H)-ylidene]ethyl phosphate + 4-amino-2-methyl-5-(diphosphooxymethyl)pyrimidine + 2 H(+) = thiamine phosphate + CO2 + diphosphate. The enzyme catalyses 2-(2-carboxy-4-methylthiazol-5-yl)ethyl phosphate + 4-amino-2-methyl-5-(diphosphooxymethyl)pyrimidine + 2 H(+) = thiamine phosphate + CO2 + diphosphate. It carries out the reaction 4-methyl-5-(2-phosphooxyethyl)-thiazole + 4-amino-2-methyl-5-(diphosphooxymethyl)pyrimidine + H(+) = thiamine phosphate + diphosphate. Its pathway is cofactor biosynthesis; thiamine diphosphate biosynthesis; thiamine phosphate from 4-amino-2-methyl-5-diphosphomethylpyrimidine and 4-methyl-5-(2-phosphoethyl)-thiazole: step 1/1. Functionally, condenses 4-methyl-5-(beta-hydroxyethyl)thiazole monophosphate (THZ-P) and 2-methyl-4-amino-5-hydroxymethyl pyrimidine pyrophosphate (HMP-PP) to form thiamine monophosphate (TMP). This is Thiamine-phosphate synthase from Syntrophomonas wolfei subsp. wolfei (strain DSM 2245B / Goettingen).